Reading from the N-terminus, the 153-residue chain is UPF0102 protein Pnap_0271 (153 aa).

Belongs to the UPF0102 family.

This chain is UPF0102 protein Pnap_0271, found in Polaromonas naphthalenivorans (strain CJ2).